A 4062-amino-acid polypeptide reads, in one-letter code: MDPAMASPGYRSVQSDRSNHLTELETRIQNLADNSQRDDVKLKMLQEIWSTIENHFTLSSHEKVVERLILSFLQVFCNTSPQFIAENNTQQLRKLMLEIILRLSNVEAMKHHSKEIIKQMMRLITVENEENANLAIKIVTDQGRSTGKMQYCGEVSQIMVSFKTMVIDLTASGRAGDMFNIKEHKAPPSTSSDEQVITEYLKTCYYQQTVLLNGTEGKPPLKYNMIPSAHQSTKVLLEVPYLVIFFYQHFKTAIQTEALDFMRLGLDFLNVRVPDEDKLKTNQIITDDFVSAQSRFLSFVNIMAKIPAFMDLIMQNGPLLVSGTMQMLERCPADLISVRREVLMALKYFTSGEMKSKFFPMLPRLIAEEVVLGTGFTAIEHLRVFMYQMLADLLHHMRNSIDYEMITHVIFVFCRTLHDPNNSSQVQIMSARLLNSLAESLCKMDSHDTFQTRDLLIEILESHVAKLKTLAVYHMPILFQQYGTEIDYEYKSYERDAEKPGMNIPKDTIRGVPKRRIRRLSIDSVEELEFLASEPSTSEDADESGGDPNKLPPPTKEGKKTSPEAILTAMSTMTPPPLAIVEARNLVKYIMHTCKFVTGQLRIARPSQDMYHCSKERDLFERLLRYGVMCMDVFVLPTTRNQPQMHSSMRTKDEKDALESLANVFTTIDHAIFREIFEKYMDFLIERIYNRNYPLQLMVNTFLVRNEVPFFASTMLSFLMSRMKLLEVSNDKTMLYVKLFKIIFSAIGANGSGLHGDKMLTSYLPEILKQSTVLALTAREPLNYFLLLRALFRSIGGGAQDILYGKFLQLLPNLLQFLNKLTNLQSCQHRIQMRELFVELCLTVPVRLSSLLPYLPLLMDPLVCAMNGSPNIVTQGLRTLELCVDNLQPEYLLENMLPVRGALMQGLWRVVSKAPDTSSMTAAFRILGKFGGANRKLLNQPQILQVATLGDTVQSYINMEFSRMGLDGNHSIHLPLSELMRVVADQMRYPADMILNPSPAMIPSTHMKKWCMELSKAVLLAGLGSSGSPITPSANLPKIIKKLLEDFDPNNRTTEVYTCPRESDRELFVNALLAMAYGIWNKDGFRHVYSKFFIKVLRQFALIGVLEYIGGNGWMRHAEEEGVLPLCLDSSVMVDALIICLSETSSSFIIAGVMSLRHINETLSLTLPDIDQMSKVPMCKYLMEKVFKLCHGPAWYARSGGINAIGYMIESFPRKFVMDFVIDVVDSIMEVILGTVEEISSGSADSAYDCLKKMMRVYFIKEEGQEEENLTLATIFVSAISKHYFHSNERVREFAIGLMDHCMVHSRLAPSLDKFYYRFKEFFEPELMRVLTTVPTMSLADAGGSLDGVQNYMFNCPDGFDFEKDMDMYKRYLSHLLDIAQTDTFTLNQRNAFKKCETCPSHFLPPFPITTHIDSMRASALQCLVIAYDRMKKQYIDKGIELGDEHKMIEILALRSSKITVDQVYESDESWRRLMTVLLRAVTDRETPEIAEKLHPSLLKVSPISTIIIATFGASYIRNISGAGDDSDSDRHISYNDIMKFKCLVELNPKILVTKMAVNLANQMVKYKMSDKISRILSVPSSFTEEELDDFEAEKMKGIRELDMIGHTVKMLAGCPVTTFTEQIIVDISRFAAHFEYAYSQDVLVNWIDDVTVILNKSPKDVWKFFLSRESILDPARRSFIRRIIVYQSSGPLRQEFMDTPEYFEKLIDLDDEENKDEDERKIWDRDMFAFSIVDRISKSCPEWLISPNSPIPRIKKLFSETEFNERYVVRALTEVKKFQEEIIVKRMTEHKYKVPKLILNTFLRYLRLNIYDYDLFIVIASCFNGNFVTDLSFLREYLETEVIPKVPLQWRRELFLRIMQKFDTDPQTAGTSMQHVKALQYLVIPTLHWAFERYDTDEIVGTAPIDDSDSSMDVDPAGSSDNLVARLTSVIDSHRNYLSDGMVIVFYQLCTLFVQNASEHIHNNNCKKQGGRLRILMLFAWPCLTMYNHQDPTMRYTGFFFLANIIERFTINRKIVLQVFHQLMTTYQQDTRDQIRKAIDILTPALRTRMEDGHLQILSHVKKILIEECHNLQHVQHVFQMVVRNYRVYYHVRLELLTPLLNGVQRALVMPNSVLENWQTRRHAVEICEMVIKWELFRTLKTDHIISDEEALEVDKQLDKLRTASSTDRFDFEEAHNKRDMPDAQRTIIKEHADVIVNMLVRFCMTFHQNSGSSSTSQSGNHGVELTKKCQLLLRAALRPSMWGEFVSFRLTMIEKFLSIPNDNALRNDISSTAYANTIQNAQHTLDMLCNIIPVMPKTSLMTMMRQLQRPLIQCLNNGAQNFKMTRLVTQIVSRLLEKTNVSVNGLDELEQLNQYISRFLHEHFGSLLNCRNLSGPVLGVLGAFSLLRTICGHEPAYLDHLMPSFVKVMERAAKEHLAYVANSQDGNMVKNFFPDVAELLCACMELVRPRVDHISMEIKRSIVGGIIAELIIKSNHDKIIQTSVKLLGAMISTQDMEFTILTVLPLLVRIQSIIVTKFKNCKDLIADYLVVVITVFENSEYRNSEAGSRLWEGFFWGLKSSDPQTREKFSIVWEKTWPHMATVDIAHRMKYIMQNQDWSKFKHAFWLKFALWGMLRTIAKRPTDPNNKRKKVILLNCATPWRTIEYAAKLKDQPMEVETEMKREEPEPMEVDEKDSQDDSKDAGEPKEKEKLTLELLLAGQQELLDEASNYDFADALDTVSQITFALNENQVTSKMWVVLFKSFWSSLSQSEIEDFTALVVPFMSSGVHNNYQTGVQDSVLAVWLEAVGDAVHLPSRLIEFISSKHECWHTGIRLLENHIWTIPKQLNNTLLREMKVAPGLAGDIETLESLGTLYNEISEFDQFAAIWERRAVFPDTMRAMSAMQLGDMELAQSYLEKSMSSTYETLAPTINPNNTSNSEKHVSPIIDKEYDHWMEMYITNCSELLQWQNVADVCNGKDMQHVRGLINAASHIPDWNVVEECKSQIAGCIPPSFHLDYTLFNLMSTVMRMNENSSPTHMKERCKIAIQECTEAHISRWRALPSVVSYGHVKILQAMNLVREIEESTDIRIALLEAPSNKVDQALMGDMKSLMKVFRNRTPTTSDDMGFVSTWYDWRNQIHGMMLQRFEYWDKVGLNVAATGNQSIVPIHSMAQAQLAVAKHAKNLGFHNLTKDLLNKLAGLTAIPMMDAQDKVCTYGKTLRDMANSAADERVKNELLCEALEVLEDVRIDDLQKDQVAALLYHRANIHSVLDQAENADYTFSAASQLVDLQNSVTTTGIKLMKNWGHHLYKRFFSTTVCKETGNNFGRQALACYFIAARVDNDIKARKPIAKILWLSKHLNACGSHEVMNRVIKKQLHSLNLFNWLYWLPQLVTDVRYKPNSNFVLILCKMAAAHPLQVFYHIREAVSVDDIDSVLEEDYTDEQMSMDVSDEDCFADDPPFDRILKICLKYRPTDIRVFHRVLKELDEMNETWVERHLRHAICLKDQMFKDFSEQMDATFNEMQYSEDVTMMTLRWRKQLEEDLVYFQQNYNLDFLEIRNKRKMIVTKGCMGVEKSQIMFEKELSQVFTEPAGMQDEFDFVTNMTNMMVSQLDIHAVDAPRPQGYIRIVLDWIRAIRRRFDRLPRRIPLESSSPYLARFSHRTGCIEMPYDLLNVLRAKNHTLMASNQTGQYISMLSRFEPNFEIVIKGGQVIRKIYIRGQTGKSAAFYLKKSVQDEPTNRVPQMFKHLDHVLQTDRESARRHLHAPTVLQMRVGQKTTLYEVASVQPYAMPPDCTRNYPASQIDIVHPYDVLTATFNGSYYPDDMVLHFFERFAQSSSSIGQPLPTPTNQDGTVAPPRLTEAHHIKNIIYEDFARDMIPFRLLYDYLTARYPDPVMYYAMKKQLLHSLAVLSTIEYHCNLTPMGPDQMMMTMNTGVLSNPSYRFEIRGGRSLHDIQHFGHEVPFRLTPNLSILVGVAQDGDLLWSMAAASKCLMKKEPEVIMRPLVWDEFANNTDCDKSRLQVFACHASNSYINGVASKLRNTNSADAKLRKDDCVSLISRAKDSDNLARMPPTYHAWF.

The interval 531–562 is disordered; that stretch reads LASEPSTSEDADESGGDPNKLPPPTKEGKKTS. 2 TPR repeats span residues 1346-1379 and 1677-1714; these read LDGV…LLDI and RRSF…DDEE. Basic and acidic residues predominate over residues 2659 to 2670; that stretch reads VETEMKREEPEP. The interval 2659-2692 is disordered; it reads VETEMKREEPEPMEVDEKDSQDDSKDAGEPKEKE. Residues 2671 to 2680 are compositionally biased toward acidic residues; sequence MEVDEKDSQD. A compositionally biased stretch (basic and acidic residues) spans 2681–2692; that stretch reads DSKDAGEPKEKE. Positions 2800–3411 constitute an FAT domain; it reads LIEFISSKHE…FYHIREAVSV (612 aa). Residues 2847–2880 form a TPR 3 repeat; the sequence is IETLESLGTLYNEISEFDQFAAIWERRAVFPDTM. One can recognise a PI3K/PI4K catalytic domain in the interval 3682 to 4046; it reads EPNFEIVIKG…DCVSLISRAK (365 aa). Residues 3688–3694 are G-loop; it reads VIKGGQV. The interval 3902–3910 is catalytic loop; sequence NLTPMGPDQ. The segment at 3922-3950 is activation loop; sequence NPSYRFEIRGGRSLHDIQHFGHEVPFRLT. In terms of domain architecture, FATC spans 4031 to 4062; it reads AKLRKDDCVSLISRAKDSDNLARMPPTYHAWF.

The protein belongs to the PI3/PI4-kinase family. TRA1 subfamily. Interacts with histone acetyltransferase Tip60 homolog mys-1. Probably a component of a complex with histone acetyltransferase (HAT) activity, at least composed of mys-1 and trr-1. As to expression, expressed in germ cells and somatic cells.

It localises to the nucleus. Its subcellular location is the chromosome. Its function is as follows. Influences germ cell fate in hermaphrodites. Acts downstream of tra-2 and tra-3 and through the Tip60 histone acetyltransferase complex to regulate germ cell fate decisions. Required for spermatogenesis and embryonic development. Acts with tra-2 to promote expression of fog-3 and control male tail development. Involved in the negative regulation of vulval development. Involved in the positive regulation of transcription factor daf-16, probably acting by histone acetylation; thereby modulating stress resistance. Plays a role in acetylation of nucleosomal histone H4, probably acting as a component of the Tip60 histone acetyltransferase complex. In Caenorhabditis elegans, this protein is Transcription-associated protein 1.